Consider the following 108-residue polypeptide: uncharacterized protein (108 aa).

Residues 75–94 are disordered; it reads TPQVSSFPSSTTSLSHSCTT. A compositionally biased stretch (low complexity) spans 79–94; the sequence is SSFPSSTTSLSHSCTT.

This is an uncharacterized protein from Homo sapiens (Human).